The following is a 123-amino-acid chain: Histone H1-like protein HC1 (123 aa).

Residues 54-123 are disordered; that stretch reads IKAEKSGLLK…KPSKARGFRK (70 aa). Over residues 61–75 the composition is skewed to basic residues; that stretch reads LLKRKPSTKAPAKVK. Low complexity predominate over residues 85–102; that stretch reads KSSAAAAKTSKAVKASKP. Residues 103–123 are compositionally biased toward basic residues; sequence ASKKTAAKKVKKPSKARGFRK.

The protein belongs to the histone H1/H5 family. HCT subfamily.

Functionally, might have a role analogous to that of eukaryotic histone proteins. In Chlamydia pneumoniae (Chlamydophila pneumoniae), this protein is Histone H1-like protein HC1 (hctA).